Reading from the N-terminus, the 252-residue chain is Imidazole glycerol phosphate synthase subunit HisF (252 aa).

Catalysis depends on residues Asp11 and Asp130.

The protein belongs to the HisA/HisF family. In terms of assembly, heterodimer of HisH and HisF.

Its subcellular location is the cytoplasm. The catalysed reaction is 5-[(5-phospho-1-deoxy-D-ribulos-1-ylimino)methylamino]-1-(5-phospho-beta-D-ribosyl)imidazole-4-carboxamide + L-glutamine = D-erythro-1-(imidazol-4-yl)glycerol 3-phosphate + 5-amino-1-(5-phospho-beta-D-ribosyl)imidazole-4-carboxamide + L-glutamate + H(+). It participates in amino-acid biosynthesis; L-histidine biosynthesis; L-histidine from 5-phospho-alpha-D-ribose 1-diphosphate: step 5/9. Functionally, IGPS catalyzes the conversion of PRFAR and glutamine to IGP, AICAR and glutamate. The HisF subunit catalyzes the cyclization activity that produces IGP and AICAR from PRFAR using the ammonia provided by the HisH subunit. The polypeptide is Imidazole glycerol phosphate synthase subunit HisF (Staphylococcus aureus (strain USA300)).